A 142-amino-acid polypeptide reads, in one-letter code: Small heat shock protein IbpB (142 aa).

The sHSP domain occupies 26 to 137; sequence SGESQSFPPY…PPQRIAINER (112 aa).

Belongs to the small heat shock protein (HSP20) family. As to quaternary structure, homodimer. Forms homomultimers of about 100-150 subunits at optimal growth temperatures. Conformation changes to oligomers at high temperatures or high ionic concentrations. The decrease in size of the multimers is accompanied by an increase in chaperone activity.

It is found in the cytoplasm. Associates with aggregated proteins, together with IbpA, to stabilize and protect them from irreversible denaturation and extensive proteolysis during heat shock and oxidative stress. Aggregated proteins bound to the IbpAB complex are more efficiently refolded and reactivated by the ATP-dependent chaperone systems ClpB and DnaK/DnaJ/GrpE. Its activity is ATP-independent. The sequence is that of Small heat shock protein IbpB from Salmonella typhi.